The primary structure comprises 790 residues: Lon protease (790 aa).

The region spanning 13 to 209 (LPLFPIRNTV…RLTDHVAKEI (197 aa)) is the Lon N-terminal domain. Residue 362–369 (GPPGVGKT) coordinates ATP. Residues 598-779 (DNQVGITIGL…DQVLDIALAT (182 aa)) form the Lon proteolytic domain. Catalysis depends on residues Ser-685 and Lys-728.

It belongs to the peptidase S16 family. As to quaternary structure, homohexamer. Organized in a ring with a central cavity.

It localises to the cytoplasm. The catalysed reaction is Hydrolysis of proteins in presence of ATP.. ATP-dependent serine protease that mediates the selective degradation of mutant and abnormal proteins as well as certain short-lived regulatory proteins. Required for cellular homeostasis and for survival from DNA damage and developmental changes induced by stress. Degrades polypeptides processively to yield small peptide fragments that are 5 to 10 amino acids long. Binds to DNA in a double-stranded, site-specific manner. This Orientia tsutsugamushi (strain Ikeda) (Rickettsia tsutsugamushi) protein is Lon protease.